The following is a 288-amino-acid chain: uncharacterized protein (288 aa).

A signal peptide spans 1–27 (MKFEFRTLVLISLAVVVVLSGCSQSPS). Positions 144 to 167 (GESGEAGGAGEQLPASDQASGEEP) are disordered.

This is an uncharacterized protein from Archaeoglobus fulgidus (strain ATCC 49558 / DSM 4304 / JCM 9628 / NBRC 100126 / VC-16).